Consider the following 397-residue polypeptide: CCA-adding enzyme (397 aa).

Gly27 and Arg30 together coordinate ATP. Residues Gly27 and Arg30 each contribute to the CTP site. Residues Asp40 and Asp42 each contribute to the Mg(2+) site. Residues Arg111, Asp154, Arg157, Arg160, and Arg163 each coordinate ATP. CTP-binding residues include Arg111, Asp154, Arg157, Arg160, and Arg163.

This sequence belongs to the tRNA nucleotidyltransferase/poly(A) polymerase family. Bacterial CCA-adding enzyme type 3 subfamily. As to quaternary structure, homodimer. It depends on Mg(2+) as a cofactor.

The enzyme catalyses a tRNA precursor + 2 CTP + ATP = a tRNA with a 3' CCA end + 3 diphosphate. The catalysed reaction is a tRNA with a 3' CCA end + 2 CTP + ATP = a tRNA with a 3' CCACCA end + 3 diphosphate. Functionally, catalyzes the addition and repair of the essential 3'-terminal CCA sequence in tRNAs without using a nucleic acid template. Adds these three nucleotides in the order of C, C, and A to the tRNA nucleotide-73, using CTP and ATP as substrates and producing inorganic pyrophosphate. tRNA 3'-terminal CCA addition is required both for tRNA processing and repair. Also involved in tRNA surveillance by mediating tandem CCA addition to generate a CCACCA at the 3' terminus of unstable tRNAs. While stable tRNAs receive only 3'-terminal CCA, unstable tRNAs are marked with CCACCA and rapidly degraded. The protein is CCA-adding enzyme of Bacillus licheniformis (strain ATCC 14580 / DSM 13 / JCM 2505 / CCUG 7422 / NBRC 12200 / NCIMB 9375 / NCTC 10341 / NRRL NRS-1264 / Gibson 46).